The following is a 244-amino-acid chain: uncharacterized protein (244 aa).

Residues 5–244 enclose the GP-PDE domain; sequence QLLLAHRGYS…ANKKFEIKIN (240 aa).

To glycerophosphoryl diester phosphodiesterases (EC 3.1.4.46). The protein to M.genitalium MG385.

This is an uncharacterized protein from Mycoplasma genitalium (strain ATCC 33530 / DSM 19775 / NCTC 10195 / G37) (Mycoplasmoides genitalium).